We begin with the raw amino-acid sequence, 480 residues long: Protein nucleotidyltransferase YdiU (480 aa).

G86, G88, R89, K109, D121, G122, R172, and R179 together coordinate ATP. D248 functions as the Proton acceptor in the catalytic mechanism. Mg(2+) contacts are provided by N249 and D258. An ATP-binding site is contributed by D258.

The protein belongs to the SELO family. Mg(2+) is required as a cofactor. It depends on Mn(2+) as a cofactor.

It catalyses the reaction L-seryl-[protein] + ATP = 3-O-(5'-adenylyl)-L-seryl-[protein] + diphosphate. The catalysed reaction is L-threonyl-[protein] + ATP = 3-O-(5'-adenylyl)-L-threonyl-[protein] + diphosphate. The enzyme catalyses L-tyrosyl-[protein] + ATP = O-(5'-adenylyl)-L-tyrosyl-[protein] + diphosphate. It carries out the reaction L-histidyl-[protein] + UTP = N(tele)-(5'-uridylyl)-L-histidyl-[protein] + diphosphate. It catalyses the reaction L-seryl-[protein] + UTP = O-(5'-uridylyl)-L-seryl-[protein] + diphosphate. The catalysed reaction is L-tyrosyl-[protein] + UTP = O-(5'-uridylyl)-L-tyrosyl-[protein] + diphosphate. Functionally, nucleotidyltransferase involved in the post-translational modification of proteins. It can catalyze the addition of adenosine monophosphate (AMP) or uridine monophosphate (UMP) to a protein, resulting in modifications known as AMPylation and UMPylation. This is Protein nucleotidyltransferase YdiU from Salmonella heidelberg (strain SL476).